Here is a 145-residue protein sequence, read N- to C-terminus: uncharacterized protein (145 aa).

The tract at residues 95 to 119 is disordered; sequence YVDSTSRTPSAKKDMQGLSVSEKQT.

This is an uncharacterized protein from Treponema pallidum (strain Nichols).